A 372-amino-acid chain; its full sequence is Fatty acid conjugase FAC2 B (372 aa).

The next 2 helical transmembrane spans lie at 44-64 and 74-94; these read YFLF…SNYI and IVWP…WMIG. Residues 95–99 carry the Histidine box-1 motif; that stretch reads HECGH. Residues 131–135 carry the Histidine box-2 motif; sequence HRNHH. The next 3 helical transmembrane spans lie at 166–186, 217–237, and 240–260; these read IGLM…YIMF, VLFS…IVTV, and AMPA…ILFA. The short motif at 304–308 is the Histidine box-3 element; that stretch reads HVIHH.

It belongs to the fatty acid desaturase type 1 family. As to expression, expressed exclusively in the developing seeds. Not detected in leaves.

The protein localises to the microsome membrane. It catalyses the reaction a (9Z,12Z)-octadecadienoyl-containing glycerolipid + AH2 + O2 = a (8E,10E,12Z)-octadecatrienoyl-containing glycerolipid + A + 2 H2O. The protein operates within lipid metabolism; polyunsaturated fatty acid biosynthesis. Its function is as follows. Fatty acid conjugase converting 18:2(9Z, 12Z) to calendic acid 18:3(8E, 10E, 12Z). Converts alpha-linolenic acid (18:3(9Z, 12Z, 15Z)) into 18:4(8E, 10E, 12Z, 15Z). Also has weak activity on the mono-unsaturates 16:1(9Z) and 18:1(9Z) producing two conjugated double bonds at delta(8) and delta(10) position. The polypeptide is Fatty acid conjugase FAC2 B (Calendula officinalis (Pot marigold)).